A 392-amino-acid polypeptide reads, in one-letter code: Neutrophil cytosol factor 1 (392 aa).

Residues 4 to 125 (HFIRHIALLG…NFFKVRPDDL (122 aa)) form the PX domain. SH3 domains are found at residues 156-215 (IILQ…PLDS) and 226-285 (YAGE…KAGQ). Residues 290–392 (AKSQIKSRGA…STKRKLASAV (103 aa)) form a disordered region. A phosphoserine mark is found at S304 and S305. Residues 310–319 (HSIHQRSRKR) show a composition bias toward basic residues. S321, S329, and S348 each carry phosphoserine. A compositionally biased stretch (basic and acidic residues) spans 376 to 385 (ILHRCSESTK).

As to quaternary structure, component of the phagocyte NADPH oxidase complex composed of an obligatory core heterodimer formed by the membrane proteins CYBA and CYBB and the cytosolic regulatory subunits NCF1/p47-phox, NCF2/p67-phox, NCF4/p40-phox and the small GTPase RAC1 or RAC2. Part of a cytosolic complex composed at least by NCF1, NCF2 and NCF4. Interacts (via C-terminus) with NCF2 (via the C-terminal SH3 domain). Interacts with NCF4. Interacts with CYBB. Interacts (via the second SH3 domain) with CYBA; interaction is phosphorylation-dependent. Interacts with NOXA1. Interacts with ADAM15. Interacts with TRAF4. Interacts with FASLG. Interacts with PARK7 (via C-terminus); the interaction is enhanced by LPS and modulates NCF1 phosphorylation and membrane translocation. In terms of processing, phosphorylated by PRKCD; phosphorylation induces activation of NCF1, leading to assembly and activation of the NADPH oxidase complex.

Its subcellular location is the cytoplasm. It localises to the cytosol. The protein localises to the membrane. Subunit of the phagocyte NADPH oxidase complex that mediates the transfer of electrons from cytosolic NADPH to O2 to produce the superoxide anion (O2(-)). In the activated complex, electrons are first transferred from NADPH to flavin adenine dinucleotide (FAD) and subsequently transferred via two heme molecules to molecular oxygen, producing superoxide through an outer-sphere reaction. Activation of the NADPH oxidase complex is initiated by the assembly of cytosolic subunits of the NADPH oxidase complex with the core NADPH oxidase complex to form a complex at the plasma membrane or phagosomal membrane. This activation process is initiated by phosphorylation dependent binding of the cytosolic NCF1/p47-phox subunit to the C-terminus of CYBA/p22-phox. In Bos taurus (Bovine), this protein is Neutrophil cytosol factor 1.